Here is a 323-residue protein sequence, read N- to C-terminus: Transcription factor JunD (323 aa).

Disordered regions lie at residues 138–173 (QNQL…APGL) and 197–221 (PFAA…QIVP). A compositionally biased stretch (gly residues) spans 141–167 (LGGGGGPNGGAAAAGGGGGGGGGGGGE). The span at 198–212 (FAAPPPRLPPPPPPP) shows a compositional bias: pro residues. The tract at residues 242–269 (RIKAERKRLRNRIAASKCRKRKLERISR) is basic motif. The bZIP domain occupies 242-305 (RIKAERKRLR…AQLKQKVLSH (64 aa)). The tract at residues 270-298 (LEEKVKSLKSQNTELASTASLLREQVAQL) is leucine-zipper.

This sequence belongs to the bZIP family. Jun subfamily. Binds DNA as a dimer.

Its subcellular location is the nucleus. This is Transcription factor JunD (JUND) from Gallus gallus (Chicken).